Consider the following 195-residue polypeptide: Oocyte-secreted protein 3 (195 aa).

The signal sequence occupies residues methionine 1 to glycine 21. A glycan (N-linked (GlcNAc...) asparagine) is linked at asparagine 102.

This sequence belongs to the PLAC1 family. As to expression, oocyte-specific.

It is found in the secreted. The polypeptide is Oocyte-secreted protein 3 (Mus musculus (Mouse)).